A 300-amino-acid polypeptide reads, in one-letter code: 5'-adenylylsulfate reductase-like 5 (300 aa).

The signal sequence occupies residues 1–23; that stretch reads MDSRVSILFVCAIAVSCFTSGSA. The region spanning 41–161 is the Thioredoxin domain; it reads FDLEAKCPPS…LIEFYEEATG (121 aa). N-linked (GlcNAc...) asparagine glycosylation is present at Asn136. Residues 202 to 222 form a helical membrane-spanning segment; sequence FLVLSLLFICLQMAILVFPIA.

The protein localises to the membrane. The polypeptide is 5'-adenylylsulfate reductase-like 5 (APRL5) (Arabidopsis thaliana (Mouse-ear cress)).